The following is a 427-amino-acid chain: ATP synthase subunit beta (427 aa).

ATP is bound at residue 160–167; it reads GGAGVGKT.

Belongs to the ATPase alpha/beta chains family. As to quaternary structure, F-type ATPases have 2 components, CF(1) - the catalytic core - and CF(0) - the membrane proton channel. CF(1) has five subunits: alpha(3), beta(3), gamma(1), delta(1), epsilon(1). CF(0) has three main subunits: a(1), b(2) and c(9-12). The alpha and beta chains form an alternating ring which encloses part of the gamma chain. CF(1) is attached to CF(0) by a central stalk formed by the gamma and epsilon chains, while a peripheral stalk is formed by the delta and b chains.

The protein resides in the cell membrane. The catalysed reaction is ATP + H2O + 4 H(+)(in) = ADP + phosphate + 5 H(+)(out). Functionally, produces ATP from ADP in the presence of a proton gradient across the membrane. The catalytic sites are hosted primarily by the beta subunits. This is ATP synthase subunit beta from Peptococcus niger.